A 292-amino-acid chain; its full sequence is uncharacterized protein (292 aa).

A helical transmembrane segment spans residues 17-37 (SMDMFFFLFIFLLFIYPEMMM).

It to M.jannaschii MJ0137.

Its subcellular location is the membrane. This is an uncharacterized protein from Methanocaldococcus jannaschii (strain ATCC 43067 / DSM 2661 / JAL-1 / JCM 10045 / NBRC 100440) (Methanococcus jannaschii).